The chain runs to 152 residues: Large ribosomal subunit protein bL9 (152 aa).

This sequence belongs to the bacterial ribosomal protein bL9 family.

Its function is as follows. Binds to the 23S rRNA. This chain is Large ribosomal subunit protein bL9, found in Picosynechococcus sp. (strain ATCC 27264 / PCC 7002 / PR-6) (Agmenellum quadruplicatum).